Here is a 442-residue protein sequence, read N- to C-terminus: Radical S-adenosyl methionine domain-containing protein 1, mitochondrial (442 aa).

A mitochondrion-targeting transit peptide spans 1–22 (MALPRSQARGWVKAAKMAQRRR). The tract at residues 1-37 (MALPRSQARGWVKAAKMAQRRRPADDTGGPQSPAPGS) is disordered. Residues 34 to 270 (APGSQRAALY…RAVLREAGFR (237 aa)) form the Radical SAM core domain. Residue tyrosine 43 coordinates S-adenosyl-L-methionine. [4Fe-4S] cluster-binding residues include cysteine 49, cysteine 53, and cysteine 56. Residues glycine 98, 99 to 100 (GT), glutamate 131, glutamine 158, arginine 170, and aspartate 195 each bind S-adenosyl-L-methionine.

Belongs to the anaerobic coproporphyrinogen-III oxidase family. HemW subfamily. Requires [4Fe-4S] cluster as cofactor.

The protein localises to the mitochondrion. Functionally, may be a heme chaperone, appears to bind heme. Homologous bacterial proteins do not have oxygen-independent coproporphyrinogen-III oxidase activity. Binds 1 [4Fe-4S] cluster. The cluster is coordinated with 3 cysteines and an exchangeable S-adenosyl-L-methionine. The chain is Radical S-adenosyl methionine domain-containing protein 1, mitochondrial (RSAD1) from Bos taurus (Bovine).